The primary structure comprises 474 residues: Light-independent protochlorophyllide reductase subunit N (474 aa).

[4Fe-4S] cluster contacts are provided by cysteine 22, cysteine 47, and cysteine 107.

It belongs to the BchN/ChlN family. As to quaternary structure, protochlorophyllide reductase is composed of three subunits; ChlL, ChlN and ChlB. Forms a heterotetramer of two ChlB and two ChlN subunits. [4Fe-4S] cluster is required as a cofactor.

It is found in the plastid. The protein resides in the chloroplast. It carries out the reaction chlorophyllide a + oxidized 2[4Fe-4S]-[ferredoxin] + 2 ADP + 2 phosphate = protochlorophyllide a + reduced 2[4Fe-4S]-[ferredoxin] + 2 ATP + 2 H2O. Its pathway is porphyrin-containing compound metabolism; chlorophyll biosynthesis (light-independent). Component of the dark-operative protochlorophyllide reductase (DPOR) that uses Mg-ATP and reduced ferredoxin to reduce ring D of protochlorophyllide (Pchlide) to form chlorophyllide a (Chlide). This reaction is light-independent. The NB-protein (ChlN-ChlB) is the catalytic component of the complex. This Physcomitrium patens (Spreading-leaved earth moss) protein is Light-independent protochlorophyllide reductase subunit N.